A 342-amino-acid chain; its full sequence is tRNA N6-adenosine threonylcarbamoyltransferase (342 aa).

Positions 111 and 115 each coordinate Fe cation. Residues 134–138, D167, G180, and N274 contribute to the substrate site; that span reads LVSGG. D302 is a binding site for Fe cation.

It belongs to the KAE1 / TsaD family. Fe(2+) is required as a cofactor.

Its subcellular location is the cytoplasm. It catalyses the reaction L-threonylcarbamoyladenylate + adenosine(37) in tRNA = N(6)-L-threonylcarbamoyladenosine(37) in tRNA + AMP + H(+). Its function is as follows. Required for the formation of a threonylcarbamoyl group on adenosine at position 37 (t(6)A37) in tRNAs that read codons beginning with adenine. Is involved in the transfer of the threonylcarbamoyl moiety of threonylcarbamoyl-AMP (TC-AMP) to the N6 group of A37, together with TsaE and TsaB. TsaD likely plays a direct catalytic role in this reaction. This is tRNA N6-adenosine threonylcarbamoyltransferase from Herminiimonas arsenicoxydans.